The following is a 355-amino-acid chain: MSGQGKRLMVMAGGTGGHVFPGLAVAHHLMAQGWQVRWLGTADRMEADLVPKHGIEIDFIRISGLRGKGIKALIAAPLRIFNAWRQARAIMKAYKPDVVLGMGGYVSGPGGLAAWSLGIPVVLHEQNGIAGLTNKWLAKIATKVMQAFPGAFPNAEVVGNPVRTDVLALPLPQQRLAGREGPVRVLVVGGSQGARILNQTMPQVAAKLGDSVTIWHQSGKGSQQSVEQAYAEAGQPQHKVTEFIDDMAAAYAWADVVVCRSGALTVSEIAAAGLPALFVPFQHKDRQQYWNALPLEKAGAAKIIEQSQLSVDAVANTLAGWSRETLLTMAERARAASIPDATERVANEVSRAARA.

UDP-N-acetyl-alpha-D-glucosamine contacts are provided by residues 15-17, Asn-127, Arg-163, Ser-191, Ile-244, 263-268, and Gln-288; these read TGG and ALTVSE.

Belongs to the glycosyltransferase 28 family. MurG subfamily.

Its subcellular location is the cell inner membrane. The enzyme catalyses di-trans,octa-cis-undecaprenyl diphospho-N-acetyl-alpha-D-muramoyl-L-alanyl-D-glutamyl-meso-2,6-diaminopimeloyl-D-alanyl-D-alanine + UDP-N-acetyl-alpha-D-glucosamine = di-trans,octa-cis-undecaprenyl diphospho-[N-acetyl-alpha-D-glucosaminyl-(1-&gt;4)]-N-acetyl-alpha-D-muramoyl-L-alanyl-D-glutamyl-meso-2,6-diaminopimeloyl-D-alanyl-D-alanine + UDP + H(+). It participates in cell wall biogenesis; peptidoglycan biosynthesis. Functionally, cell wall formation. Catalyzes the transfer of a GlcNAc subunit on undecaprenyl-pyrophosphoryl-MurNAc-pentapeptide (lipid intermediate I) to form undecaprenyl-pyrophosphoryl-MurNAc-(pentapeptide)GlcNAc (lipid intermediate II). This is UDP-N-acetylglucosamine--N-acetylmuramyl-(pentapeptide) pyrophosphoryl-undecaprenol N-acetylglucosamine transferase from Escherichia coli O127:H6 (strain E2348/69 / EPEC).